A 509-amino-acid polypeptide reads, in one-letter code: DNA primase large subunit (509 aa).

The segment at leucine 253–lysine 270 is interdomain linker. The tract at residues glycine 266–serine 509 is interacts with PRIM1. [4Fe-4S] cluster is bound by residues cysteine 287, cysteine 367, cysteine 384, and cysteine 424. Residues histidine 300–asparagine 442 are RNA:DNA duplex-binding. The interval isoleucine 461–alanine 486 is disordered. Threonine 470 carries the post-translational modification Phosphothreonine.

This sequence belongs to the eukaryotic-type primase large subunit family. As to quaternary structure, heterodimer of a catalytic subunit PRIM1 and a regulatory subunit PRIM2, also known as the DNA primase complex. Interacts via (C-terminus) with PRIM1. Component of the alpha DNA polymerase complex (also known as the alpha DNA polymerase-primase complex) consisting of four subunits: the catalytic subunit POLA1, the regulatory subunit POLA2, and the primase complex subunits PRIM1 and PRIM2 respectively. Within the complex, POLA1 directly interacts with PRIM2. [4Fe-4S] cluster serves as cofactor.

Regulatory subunit of the DNA primase complex and component of the DNA polymerase alpha complex (also known as the alpha DNA polymerase-primase complex) which play an essential role in the initiation of DNA synthesis. During the S phase of the cell cycle, the DNA polymerase alpha complex (composed of a catalytic subunit POLA1, an accessory subunit POLA2 and two primase subunits, the catalytic subunit PRIM1 and the regulatory subunit PRIM2) is recruited to DNA at the replicative forks via direct interactions with MCM10 and WDHD1. The primase subunit of the polymerase alpha complex initiates DNA synthesis by oligomerising short RNA primers on both leading and lagging strands. These primers are initially extended by the polymerase alpha catalytic subunit and subsequently transferred to polymerase delta and polymerase epsilon for processive synthesis on the lagging and leading strand, respectively. In the primase complex, both subunits are necessary for the initial di-nucleotide formation, but the extension of the primer depends only on the catalytic subunit. Binds RNA:DNA duplex and coordinates the catalytic activities of PRIM1 and POLA2 during primase-to-polymerase switch. The polypeptide is DNA primase large subunit (PRIM2) (Homo sapiens (Human)).